An 80-amino-acid polypeptide reads, in one-letter code: Calmodulin (80 aa).

EF-hand domains follow at residues 12 to 47 (DSEE…LGEK) and 48 to 80 (LTDE…MTSK). The Ca(2+) site is built by D25, D27, N29, E36, D61, D63, D65, Q67, and E72.

The protein belongs to the calmodulin family.

In terms of biological role, calmodulin mediates the control of a large number of enzymes, ion channels and other proteins by Ca(2+). Among the enzymes to be stimulated by the calmodulin-Ca(2+) complex are a number of protein kinases and phosphatases. This chain is Calmodulin, found in Strongylocentrotus purpuratus (Purple sea urchin).